Here is a 323-residue protein sequence, read N- to C-terminus: Glyoxylate/hydroxypyruvate reductase B (323 aa).

The interval 37–62 (AEHGGAGARRRHDRLQQHGGSSAAGE) is disordered. Active-site residues include arginine 236 and glutamate 265. The active-site Proton donor is histidine 284.

Belongs to the D-isomer specific 2-hydroxyacid dehydrogenase family. GhrB subfamily. As to quaternary structure, homodimer.

The protein localises to the cytoplasm. It catalyses the reaction glycolate + NADP(+) = glyoxylate + NADPH + H(+). The catalysed reaction is (R)-glycerate + NAD(+) = 3-hydroxypyruvate + NADH + H(+). The enzyme catalyses (R)-glycerate + NADP(+) = 3-hydroxypyruvate + NADPH + H(+). In terms of biological role, catalyzes the NADPH-dependent reduction of glyoxylate and hydroxypyruvate into glycolate and glycerate, respectively. The protein is Glyoxylate/hydroxypyruvate reductase B (tkrA) of Enterobacter agglomerans (Erwinia herbicola).